A 388-amino-acid polypeptide reads, in one-letter code: Succinate--CoA ligase [ADP-forming] subunit beta (388 aa).

One can recognise an ATP-grasp domain in the interval 9 to 244 (KQLFARYGLP…QSQEDPREAQ (236 aa)). Residues lysine 46, 53–55 (GRG), glutamate 99, threonine 102, and glutamate 107 each bind ATP. Mg(2+) is bound by residues asparagine 199 and aspartate 213. Residues asparagine 264 and 321-323 (GIV) contribute to the substrate site.

This sequence belongs to the succinate/malate CoA ligase beta subunit family. In terms of assembly, heterotetramer of two alpha and two beta subunits. The cofactor is Mg(2+).

The enzyme catalyses succinate + ATP + CoA = succinyl-CoA + ADP + phosphate. The catalysed reaction is GTP + succinate + CoA = succinyl-CoA + GDP + phosphate. It participates in carbohydrate metabolism; tricarboxylic acid cycle; succinate from succinyl-CoA (ligase route): step 1/1. In terms of biological role, succinyl-CoA synthetase functions in the citric acid cycle (TCA), coupling the hydrolysis of succinyl-CoA to the synthesis of either ATP or GTP and thus represents the only step of substrate-level phosphorylation in the TCA. The beta subunit provides nucleotide specificity of the enzyme and binds the substrate succinate, while the binding sites for coenzyme A and phosphate are found in the alpha subunit. This chain is Succinate--CoA ligase [ADP-forming] subunit beta, found in Klebsiella pneumoniae (strain 342).